A 419-amino-acid chain; its full sequence is Glucose-1-phosphate adenylyltransferase (419 aa).

Alpha-D-glucose 1-phosphate is bound by residues Tyr-107, Gly-172, 187-188 (EK), and Ser-205.

The protein belongs to the bacterial/plant glucose-1-phosphate adenylyltransferase family. In terms of assembly, homotetramer.

It catalyses the reaction alpha-D-glucose 1-phosphate + ATP + H(+) = ADP-alpha-D-glucose + diphosphate. It functions in the pathway glycan biosynthesis; glycogen biosynthesis. Its function is as follows. Involved in the biosynthesis of ADP-glucose, a building block required for the elongation reactions to produce glycogen. Catalyzes the reaction between ATP and alpha-D-glucose 1-phosphate (G1P) to produce pyrophosphate and ADP-Glc. This Novosphingobium aromaticivorans (strain ATCC 700278 / DSM 12444 / CCUG 56034 / CIP 105152 / NBRC 16084 / F199) protein is Glucose-1-phosphate adenylyltransferase.